Here is a 241-residue protein sequence, read N- to C-terminus: 1-(5-phosphoribosyl)-5-[(5-phosphoribosylamino)methylideneamino] imidazole-4-carboxamide isomerase (241 aa).

Asp8 (proton acceptor) is an active-site residue. The active-site Proton donor is Asp129.

The protein belongs to the HisA/HisF family.

The protein resides in the cytoplasm. It catalyses the reaction 1-(5-phospho-beta-D-ribosyl)-5-[(5-phospho-beta-D-ribosylamino)methylideneamino]imidazole-4-carboxamide = 5-[(5-phospho-1-deoxy-D-ribulos-1-ylimino)methylamino]-1-(5-phospho-beta-D-ribosyl)imidazole-4-carboxamide. It participates in amino-acid biosynthesis; L-histidine biosynthesis; L-histidine from 5-phospho-alpha-D-ribose 1-diphosphate: step 4/9. This chain is 1-(5-phosphoribosyl)-5-[(5-phosphoribosylamino)methylideneamino] imidazole-4-carboxamide isomerase, found in Novosphingobium aromaticivorans (strain ATCC 700278 / DSM 12444 / CCUG 56034 / CIP 105152 / NBRC 16084 / F199).